The sequence spans 101 residues: NADH-quinone oxidoreductase subunit K (101 aa).

Transmembrane regions (helical) follow at residues 4–24 (LAHY…GIFL), 30–50 (IIIL…FVAF), and 61–81 (IFVF…LAIL).

Belongs to the complex I subunit 4L family. NDH-1 is composed of 14 different subunits. Subunits NuoA, H, J, K, L, M, N constitute the membrane sector of the complex.

It localises to the cell inner membrane. It catalyses the reaction a quinone + NADH + 5 H(+)(in) = a quinol + NAD(+) + 4 H(+)(out). Its function is as follows. NDH-1 shuttles electrons from NADH, via FMN and iron-sulfur (Fe-S) centers, to quinones in the respiratory chain. The immediate electron acceptor for the enzyme in this species is believed to be ubiquinone. Couples the redox reaction to proton translocation (for every two electrons transferred, four hydrogen ions are translocated across the cytoplasmic membrane), and thus conserves the redox energy in a proton gradient. The protein is NADH-quinone oxidoreductase subunit K of Paraburkholderia xenovorans (strain LB400).